A 339-amino-acid chain; its full sequence is O-methyltransferase 7 (339 aa).

G186, D209, S232, F233, and K246 together coordinate S-adenosyl-L-methionine. H250 serves as the catalytic Proton acceptor.

This sequence belongs to the class I-like SAM-binding methyltransferase superfamily. Cation-independent O-methyltransferase family. COMT subfamily.

The catalysed reaction is (3,5-dichloro-2,4,6-trihydroxyphenyl)hexan-1-one + S-adenosyl-L-methionine = 1-(3,5-dichloro-2,6-dihydroxy-4-methoxyphenyl)hexan-1-one + S-adenosyl-L-homocysteine + H(+). The sequence is that of O-methyltransferase 7 (omt7) from Dictyostelium discoideum (Social amoeba).